The primary structure comprises 254 residues: Arginine transport ATP-binding protein ArgV (254 aa).

An ABC transporter domain is found at 6 to 250 (IDAQQVCKNY…PKEQRTKDFL (245 aa)). Position 38-45 (38-45 (GPSGSGKS)) interacts with ATP.

This sequence belongs to the ABC transporter superfamily. As to quaternary structure, the complex is probably composed of two ATP-binding proteins (ArgV), two transmembrane proteins (ArgU) and a solute-binding protein (ArgT).

The protein resides in the cell membrane. The enzyme catalyses a polar amino acid(out) + ATP + H2O = a polar amino acid(in) + ADP + phosphate + H(+). The catalysed reaction is L-arginine(out) + ATP + H2O = L-arginine(in) + ADP + phosphate + H(+). In terms of biological role, part of the ABC transporter complex ArgTUV involved in L-arginine import. May also transport L-citrulline. Probably responsible for energy coupling to the transport system. The chain is Arginine transport ATP-binding protein ArgV from Corynebacterium glutamicum (strain ATCC 13032 / DSM 20300 / JCM 1318 / BCRC 11384 / CCUG 27702 / LMG 3730 / NBRC 12168 / NCIMB 10025 / NRRL B-2784 / 534).